The chain runs to 318 residues: Methionyl-tRNA formyltransferase (318 aa).

114–117 (SLLP) is a binding site for (6S)-5,6,7,8-tetrahydrofolate.

This sequence belongs to the Fmt family.

It catalyses the reaction L-methionyl-tRNA(fMet) + (6R)-10-formyltetrahydrofolate = N-formyl-L-methionyl-tRNA(fMet) + (6S)-5,6,7,8-tetrahydrofolate + H(+). In terms of biological role, attaches a formyl group to the free amino group of methionyl-tRNA(fMet). The formyl group appears to play a dual role in the initiator identity of N-formylmethionyl-tRNA by promoting its recognition by IF2 and preventing the misappropriation of this tRNA by the elongation apparatus. The protein is Methionyl-tRNA formyltransferase of Protochlamydia amoebophila (strain UWE25).